The sequence spans 466 residues: Asparagine--tRNA ligase (466 aa).

The protein belongs to the class-II aminoacyl-tRNA synthetase family. In terms of assembly, homodimer.

It localises to the cytoplasm. It catalyses the reaction tRNA(Asn) + L-asparagine + ATP = L-asparaginyl-tRNA(Asn) + AMP + diphosphate + H(+). This is Asparagine--tRNA ligase from Aeromonas hydrophila subsp. hydrophila (strain ATCC 7966 / DSM 30187 / BCRC 13018 / CCUG 14551 / JCM 1027 / KCTC 2358 / NCIMB 9240 / NCTC 8049).